A 153-amino-acid polypeptide reads, in one-letter code: ORM1-like protein 1 (153 aa).

Over 1–26 the chain is Cytoplasmic; sequence MNVGVAHSEVNPNTRVMNSRGMWLTY. The next 2 helical transmembrane spans lie at 27-46 and 47-64; these read ALGV…FSVP and VAWT…YVFL. Residues 65–100 lie on the Cytoplasmic side of the membrane; that stretch reads HAVKGTPFETPDQGKARLLTHWEQLDYGVQFTSSRK. Residues 101–121 traverse the membrane as a helical segment; it reads FFTISPIILYFLASFYTKYDP. The Extracellular portion of the chain corresponds to 122–123; sequence TH. Residues 124–140 traverse the membrane as a helical segment; it reads FILNTASLLSVLIPKMP. Over 141–153 the chain is Cytoplasmic; that stretch reads QLHGVRIFGINKY.

It belongs to the ORM family. In terms of assembly, ceramide-sensitive subunit of the serine palmitoyltransferase (SPT) complex, which is also composed of SPTLC1, SPTLC2/3 and SPTSSA/B. Widely expressed. Expressed in adult and fetal heart, brain, lung, liver, skeletal muscle and kidney. Expressed in adult pancreas and placenta and in fetal spleen abd thymus. Expressed at intermediate level in pancreas, placenta and brain but low in skeletal muscle and lung.

It is found in the endoplasmic reticulum membrane. Its function is as follows. Plays an essential role in the homeostatic regulation of sphingolipid de novo biosynthesis by modulating the activity of the serine palmitoyltransferase (SPT) in response to ceramide levels. When complexed to SPT, the binding of ceramides to its N-terminus stabilizes a conformation that block SPT substrate entry, hence preventing SPT catalytic activity. Through this mechanism, maintains ceramide levels at sufficient concentrations for the production of complex sphingolipids, but which prevents the accumulation of ceramides to levels that trigger apoptosis. This chain is ORM1-like protein 1 (ORMDL1), found in Homo sapiens (Human).